The chain runs to 180 residues: Putative 3-methyladenine DNA glycosylase (180 aa).

The protein belongs to the DNA glycosylase MPG family.

This chain is Putative 3-methyladenine DNA glycosylase, found in Wolbachia pipientis wMel.